The chain runs to 317 residues: Ferrochelatase (317 aa).

Residues H187 and E268 each coordinate Fe cation.

Belongs to the ferrochelatase family.

It is found in the cytoplasm. It carries out the reaction heme b + 2 H(+) = protoporphyrin IX + Fe(2+). The protein operates within porphyrin-containing compound metabolism; protoheme biosynthesis; protoheme from protoporphyrin-IX: step 1/1. Functionally, catalyzes the ferrous insertion into protoporphyrin IX. In Campylobacter concisus (strain 13826), this protein is Ferrochelatase.